A 377-amino-acid polypeptide reads, in one-letter code: Alanine racemase (377 aa).

K37 (proton acceptor; specific for D-alanine) is an active-site residue. At K37 the chain carries N6-(pyridoxal phosphate)lysine. R135 contacts substrate. The Proton acceptor; specific for L-alanine role is filled by Y271. M319 is a binding site for substrate.

Belongs to the alanine racemase family. The cofactor is pyridoxal 5'-phosphate.

The catalysed reaction is L-alanine = D-alanine. Its pathway is amino-acid biosynthesis; D-alanine biosynthesis; D-alanine from L-alanine: step 1/1. In terms of biological role, catalyzes the interconversion of L-alanine and D-alanine. May also act on other amino acids. The protein is Alanine racemase (alr) of Helicobacter pylori (strain P12).